Here is a 401-residue protein sequence, read N- to C-terminus: Elongation factor Tu (401 aa).

The 200-residue stretch at 10–209 (KPHINVGTIG…AVDEYIPTPQ (200 aa)) folds into the tr-type G domain. A G1 region spans residues 19 to 26 (GHVDHGKT). 19-26 (GHVDHGKT) provides a ligand contact to GTP. Mg(2+) is bound at residue threonine 26. The segment at 60-64 (GITIA) is G2. The G3 stretch occupies residues 81–84 (DCPG). GTP-binding positions include 81–85 (DCPGH) and 136–139 (NKVD). The segment at 136–139 (NKVD) is G4. The interval 174-176 (SAR) is G5.

This sequence belongs to the TRAFAC class translation factor GTPase superfamily. Classic translation factor GTPase family. EF-Tu/EF-1A subfamily. In terms of assembly, monomer.

The protein localises to the cytoplasm. It catalyses the reaction GTP + H2O = GDP + phosphate + H(+). In terms of biological role, GTP hydrolase that promotes the GTP-dependent binding of aminoacyl-tRNA to the A-site of ribosomes during protein biosynthesis. This chain is Elongation factor Tu, found in Chloroflexus aurantiacus (strain ATCC 29366 / DSM 635 / J-10-fl).